A 318-amino-acid polypeptide reads, in one-letter code: Aspartate carbamoyltransferase catalytic subunit (318 aa).

Residues Arg-58 and Thr-59 each coordinate carbamoyl phosphate. Lys-86 is an L-aspartate binding site. 3 residues coordinate carbamoyl phosphate: Arg-108, His-141, and Gln-144. The L-aspartate site is built by Arg-174 and Arg-226. Positions 270 and 271 each coordinate carbamoyl phosphate.

It belongs to the aspartate/ornithine carbamoyltransferase superfamily. ATCase family. In terms of assembly, heterododecamer (2C3:3R2) of six catalytic PyrB chains organized as two trimers (C3), and six regulatory PyrI chains organized as three dimers (R2).

It catalyses the reaction carbamoyl phosphate + L-aspartate = N-carbamoyl-L-aspartate + phosphate + H(+). The protein operates within pyrimidine metabolism; UMP biosynthesis via de novo pathway; (S)-dihydroorotate from bicarbonate: step 2/3. Catalyzes the condensation of carbamoyl phosphate and aspartate to form carbamoyl aspartate and inorganic phosphate, the committed step in the de novo pyrimidine nucleotide biosynthesis pathway. The protein is Aspartate carbamoyltransferase catalytic subunit of Lactobacillus delbrueckii subsp. bulgaricus (strain ATCC 11842 / DSM 20081 / BCRC 10696 / JCM 1002 / NBRC 13953 / NCIMB 11778 / NCTC 12712 / WDCM 00102 / Lb 14).